Consider the following 274-residue polypeptide: Shikimate dehydrogenase (NADP(+)) (274 aa).

Shikimate contacts are provided by residues S14–S16 and T61. K65 functions as the Proton acceptor in the catalytic mechanism. Shikimate contacts are provided by N85 and D106. NADP(+) contacts are provided by residues G130 to A134, N153 to R158, and A217. A shikimate-binding site is contributed by Y219. G240 lines the NADP(+) pocket.

Belongs to the shikimate dehydrogenase family. In terms of assembly, homodimer.

It carries out the reaction shikimate + NADP(+) = 3-dehydroshikimate + NADPH + H(+). The protein operates within metabolic intermediate biosynthesis; chorismate biosynthesis; chorismate from D-erythrose 4-phosphate and phosphoenolpyruvate: step 4/7. In terms of biological role, involved in the biosynthesis of the chorismate, which leads to the biosynthesis of aromatic amino acids. Catalyzes the reversible NADPH linked reduction of 3-dehydroshikimate (DHSA) to yield shikimate (SA). The polypeptide is Shikimate dehydrogenase (NADP(+)) (Halorubrum lacusprofundi (strain ATCC 49239 / DSM 5036 / JCM 8891 / ACAM 34)).